Reading from the N-terminus, the 251-residue chain is MPRFASPLLRNVIIRSQFDGIKRKQCLQYLKTLRTLQYDGFKTVYFGETNIPESLVTGEDISDGYFIQTPTWCIVHAAGSQGWVPWKYRVFLRDELCIKQEDSLFSEFCDVVRKAYGKCVIVVKERRQQEEQRPKEDREAEGQFYIPTVISLASIMCCPEVAKSCGHELLSLPSPCNYLNPLDSAWSSLKWFIINNRNEFCLQSIDSGYSYQCILFSNLISKGIERINASKWRTLTSKVRRWENYYLGKFS.

It belongs to the FAM243 family.

This is an uncharacterized protein from Homo sapiens (Human).